The chain runs to 271 residues: Putative two-component membrane permease complex subunit SMU_746c (271 aa).

Transmembrane regions (helical) follow at residues 34–54 (LAYISMALSFILALVQLTIWM) and 70–90 (FFSPIILAIPVFIGLLVPTVP).

The protein belongs to the UPF0703 family. Interacts with SMU_747c.

It is found in the cell membrane. Its function is as follows. Could be part of a two-component membrane permease system responsible for amino acid transport under low pH. Involved in acidogenesis, biofilm formation and low-pH survival. This chain is Putative two-component membrane permease complex subunit SMU_746c, found in Streptococcus mutans serotype c (strain ATCC 700610 / UA159).